The following is a 417-amino-acid chain: Serine hydroxymethyltransferase (417 aa).

Lysine 54 bears the N6-acetyllysine mark. Residues leucine 121 and 125 to 127 (GHL) contribute to the (6S)-5,6,7,8-tetrahydrofolate site. Position 229 is an N6-(pyridoxal phosphate)lysine (lysine 229). N6-acetyllysine is present on residues lysine 250, lysine 285, and lysine 354. Residue 355–357 (SPF) participates in (6S)-5,6,7,8-tetrahydrofolate binding. An N6-acetyllysine modification is found at lysine 375.

This sequence belongs to the SHMT family. Homodimer. Pyridoxal 5'-phosphate is required as a cofactor.

Its subcellular location is the cytoplasm. The enzyme catalyses (6R)-5,10-methylene-5,6,7,8-tetrahydrofolate + glycine + H2O = (6S)-5,6,7,8-tetrahydrofolate + L-serine. The protein operates within one-carbon metabolism; tetrahydrofolate interconversion. It functions in the pathway amino-acid biosynthesis; glycine biosynthesis; glycine from L-serine: step 1/1. In terms of biological role, catalyzes the reversible interconversion of serine and glycine with tetrahydrofolate (THF) serving as the one-carbon carrier. This reaction serves as the major source of one-carbon groups required for the biosynthesis of purines, thymidylate, methionine, and other important biomolecules. Also exhibits THF-independent aldolase activity toward beta-hydroxyamino acids, producing glycine and aldehydes, via a retro-aldol mechanism. This chain is Serine hydroxymethyltransferase, found in Shigella sonnei (strain Ss046).